Consider the following 485-residue polypeptide: Elongation factor TuB, chloroplastic (485 aa).

Residues M1–R76 constitute a chloroplast transit peptide. Residues K86 to Q290 form the tr-type G domain. A G1 region spans residues G95 to T102. G95–T102 contacts GTP. The interval G136 to N140 is G2. The interval D157 to G160 is G3. Residues D157–H161 and N212–D215 each bind GTP. A G4 region spans residues N212–D215. Residues S250 to L252 form a G5 region.

The protein belongs to the TRAFAC class translation factor GTPase superfamily. Classic translation factor GTPase family. EF-Tu/EF-1A subfamily.

It is found in the plastid. The protein localises to the chloroplast. This protein promotes the GTP-dependent binding of aminoacyl-tRNA to the A-site of ribosomes during protein biosynthesis. This Nicotiana sylvestris (Wood tobacco) protein is Elongation factor TuB, chloroplastic (TUFB).